A 346-amino-acid polypeptide reads, in one-letter code: Anthranilate phosphoribosyltransferase (346 aa).

Residues G81, 84–85, 91–94, 109–117, and S121 contribute to the 5-phospho-alpha-D-ribose 1-diphosphate site; these read GD, NVST, and KHGGRSVSS. G81 is a binding site for anthranilate. S93 serves as a coordination point for Mg(2+). R167 contributes to the anthranilate binding site. Mg(2+) contacts are provided by D226 and E227.

The protein belongs to the anthranilate phosphoribosyltransferase family. In terms of assembly, homodimer. Requires Mg(2+) as cofactor.

It catalyses the reaction N-(5-phospho-beta-D-ribosyl)anthranilate + diphosphate = 5-phospho-alpha-D-ribose 1-diphosphate + anthranilate. Its pathway is amino-acid biosynthesis; L-tryptophan biosynthesis; L-tryptophan from chorismate: step 2/5. Catalyzes the transfer of the phosphoribosyl group of 5-phosphorylribose-1-pyrophosphate (PRPP) to anthranilate to yield N-(5'-phosphoribosyl)-anthranilate (PRA). This chain is Anthranilate phosphoribosyltransferase, found in Marinomonas sp. (strain MWYL1).